Reading from the N-terminus, the 374-residue chain is GDSL esterase/lipase 1 (374 aa).

The signal sequence occupies residues 1 to 25; that stretch reads MENSQLVSITFLAYTIIISIGSINC. A glycan (N-linked (GlcNAc...) asparagine) is linked at N34. The active-site Nucleophile is S44. N184, N203, and N330 each carry an N-linked (GlcNAc...) asparagine glycan. Residues D338 and H341 each act as charge relay system in the active site. N-linked (GlcNAc...) asparagine glycosylation is present at N360.

The protein belongs to the 'GDSL' lipolytic enzyme family.

Its subcellular location is the secreted. Its function is as follows. Confers resistance to the necrotrophic fungus Alternaria brassicicola. Possesses lipase and antimicrobial activities that directly disrupt fungal spore integrity. Triggers systemic resistance, mostly by the ethylene-dependent pathway. This is GDSL esterase/lipase 1 from Arabidopsis thaliana (Mouse-ear cress).